The chain runs to 691 residues: DNA ligase (691 aa).

NAD(+)-binding positions include 41 to 45, 90 to 91, and Glu130; these read DAEYD and SL. Lys132 (N6-AMP-lysine intermediate) is an active-site residue. Arg153, Glu190, Lys307, and Lys331 together coordinate NAD(+). Residues Cys425, Cys428, Cys443, and Cys449 each coordinate Zn(2+). One can recognise a BRCT domain in the interval 610-691; the sequence is APQGVLAGKT…MHTLLEGHAR (82 aa).

It belongs to the NAD-dependent DNA ligase family. LigA subfamily. Mg(2+) is required as a cofactor. It depends on Mn(2+) as a cofactor.

It carries out the reaction NAD(+) + (deoxyribonucleotide)n-3'-hydroxyl + 5'-phospho-(deoxyribonucleotide)m = (deoxyribonucleotide)n+m + AMP + beta-nicotinamide D-nucleotide.. Functionally, DNA ligase that catalyzes the formation of phosphodiester linkages between 5'-phosphoryl and 3'-hydroxyl groups in double-stranded DNA using NAD as a coenzyme and as the energy source for the reaction. It is essential for DNA replication and repair of damaged DNA. This chain is DNA ligase, found in Burkholderia pseudomallei (strain 1710b).